Reading from the N-terminus, the 404-residue chain is Adenosylhomocysteinase (404 aa).

Substrate-binding residues include Asp114 and Glu139. Position 140–142 (140–142 (TTT)) interacts with NAD(+). Positions 169 and 173 each coordinate substrate. NAD(+)-binding positions include Asn174, 203 to 208 (GYGWCG), Glu226, Asn261, 282 to 284 (AGH), and Asn329.

This sequence belongs to the adenosylhomocysteinase family. The cofactor is NAD(+).

Its subcellular location is the cytoplasm. It carries out the reaction S-adenosyl-L-homocysteine + H2O = L-homocysteine + adenosine. The protein operates within amino-acid biosynthesis; L-homocysteine biosynthesis; L-homocysteine from S-adenosyl-L-homocysteine: step 1/1. Its function is as follows. May play a key role in the regulation of the intracellular concentration of adenosylhomocysteine. In Thermotoga maritima (strain ATCC 43589 / DSM 3109 / JCM 10099 / NBRC 100826 / MSB8), this protein is Adenosylhomocysteinase.